Reading from the N-terminus, the 321-residue chain is 4-hydroxy-2-oxoglutarate aldolase, mitochondrial (321 aa).

The transit peptide at 1-23 (MLGPQIWASMRQGLSRGLSRNVK) directs the protein to the mitochondrion. Substrate is bound at residue 71–72 (ST). Lysine 190 acts as the Schiff-base intermediate with substrate in catalysis. Substrate-binding residues include serine 192 and glycine 216.

This sequence belongs to the DapA family. In terms of assembly, homotetramer.

Its subcellular location is the mitochondrion. It carries out the reaction (4S)-4-hydroxy-2-oxoglutarate = glyoxylate + pyruvate. It catalyses the reaction (4R)-4-hydroxy-2-oxoglutarate = glyoxylate + pyruvate. Its activity is regulated as follows. Inhibited by divalent cations. Its function is as follows. Catalyzes the final step in the metabolic pathway of hydroxyproline. This is 4-hydroxy-2-oxoglutarate aldolase, mitochondrial (Hoga1) from Mus musculus (Mouse).